The primary structure comprises 273 residues: Putative phosphoenolpyruvate synthase regulatory protein (273 aa).

Residue 154-161 (GVSRSGKT) participates in ADP binding.

This sequence belongs to the pyruvate, phosphate/water dikinase regulatory protein family. PSRP subfamily.

The catalysed reaction is [pyruvate, water dikinase] + ADP = [pyruvate, water dikinase]-phosphate + AMP + H(+). It catalyses the reaction [pyruvate, water dikinase]-phosphate + phosphate + H(+) = [pyruvate, water dikinase] + diphosphate. Its function is as follows. Bifunctional serine/threonine kinase and phosphorylase involved in the regulation of the phosphoenolpyruvate synthase (PEPS) by catalyzing its phosphorylation/dephosphorylation. In Halorhodospira halophila (strain DSM 244 / SL1) (Ectothiorhodospira halophila (strain DSM 244 / SL1)), this protein is Putative phosphoenolpyruvate synthase regulatory protein.